A 417-amino-acid chain; its full sequence is Nucleosome assembly protein (417 aa).

The disordered stretch occupies residues 1 to 47 (MSDPIRTKPKSSMQIDNAPTPHNTPASVLNPSYLKNGNPVRAQAQEQ). The span at 10–35 (KSSMQIDNAPTPHNTPASVLNPSYLK) shows a compositional bias: polar residues. Residues Thr-20 and Thr-24 each carry the phosphothreonine modification. Ser-27 carries the phosphoserine modification. A Glycyl lysine isopeptide (Lys-Gly) (interchain with G-Cter in ubiquitin) cross-link involves residue Lys-50. The residue at position 53 (Thr-53) is a Phosphothreonine. Residues Ser-69, Ser-76, Ser-82, Ser-98, Ser-104, and Ser-140 each carry the phosphoserine modification. An interaction with NBA1 region spans residues 143-362 (EQPKPEQIAK…IPRAVDWFTG (220 aa)). Phosphoserine; by CK2 is present on residues Ser-159 and Ser-177. The segment at residues 330 to 356 (LEEDLEERLALDYSIGEQLKDKLIPRA) is a DNA-binding region (H-T-H motif). The disordered stretch occupies residues 364–417 (ALEFEFEEDEEEADEDEDEEEDDDHGLEDDDGESAEEQDDFAGRPEQAPECKQS). Over residues 367 to 403 (FEFEEDEEEADEDEDEEEDDDHGLEDDDGESAEEQDD) the composition is skewed to acidic residues. Phosphoserine; by CK2 is present on Ser-397. Over residues 404 to 417 (FAGRPEQAPECKQS) the composition is skewed to basic and acidic residues.

The protein belongs to the nucleosome assembly protein (NAP) family. As to quaternary structure, component of the GIN4 complex composed of at least BNI5, CDC3, CDC10, CDC11, CDC12, GIN4, NAP1 and SHS1 which forms a ring at the bud neck. Homodimer (in-vitro). Interacts with the B-type cyclin CLB2. Interacts with 60S ribosomal protein L18 (RPL18A or RPL18B), CKA2, CKI1, eukaryotic elongation factor 1 complex eEF1A (TEF1 or TEF2), FOL1, HSC82, HTA2, HTB2, HTZ1, KAP114, KCC4, NIS1, SSA1, SSA2, SSB1, SSC1, SHM1, SIP5 and TCO89. Interacts with NBA1. Interacts with histone H3/H4 heterodimers. Phosphorylation by CK2 is required for normal progression through S phase. CK2 phosphorylation is not required for correct bud formation nor histone binding.

It is found in the cytoplasm. It localises to the nucleus. The protein resides in the bud neck. Its function is as follows. Acidic protein, which assembles histones into an octamer (in vitro). Involved in the regulation of the localization and the function of the septins during mitosis. Involved in the function of B-type cyclins. In Saccharomyces cerevisiae (strain ATCC 204508 / S288c) (Baker's yeast), this protein is Nucleosome assembly protein.